The chain runs to 152 residues: 3-dehydroquinate dehydratase (152 aa).

Tyr26 functions as the Proton acceptor in the catalytic mechanism. Substrate contacts are provided by Asn78, His84, and Asp91. Residue His104 is the Proton donor of the active site. Residues 105-106 and Arg115 each bind substrate; that span reads IS.

The protein belongs to the type-II 3-dehydroquinase family. Homododecamer.

It catalyses the reaction 3-dehydroquinate = 3-dehydroshikimate + H2O. Its pathway is metabolic intermediate biosynthesis; chorismate biosynthesis; chorismate from D-erythrose 4-phosphate and phosphoenolpyruvate: step 3/7. Functionally, catalyzes a trans-dehydration via an enolate intermediate. This chain is 3-dehydroquinate dehydratase, found in Buchnera aphidicola subsp. Cinara cedri (strain Cc).